The sequence spans 36 residues: Cytochrome b6-f complex subunit 5 (36 aa).

A helical transmembrane segment spans residues 5-25; sequence LLSGIVLGLIPITILGLLMAA.

This sequence belongs to the PetG family. In terms of assembly, the 4 large subunits of the cytochrome b6-f complex are cytochrome b6, subunit IV (17 kDa polypeptide, PetD), cytochrome f and the Rieske protein, while the 4 small subunits are PetG, PetL, PetM and PetN. The complex functions as a dimer.

The protein resides in the plastid. It localises to the chloroplast thylakoid membrane. Its function is as follows. Component of the cytochrome b6-f complex, which mediates electron transfer between photosystem II (PSII) and photosystem I (PSI), cyclic electron flow around PSI, and state transitions. PetG is required for either the stability or assembly of the cytochrome b6-f complex. In Cyanidioschyzon merolae (strain NIES-3377 / 10D) (Unicellular red alga), this protein is Cytochrome b6-f complex subunit 5.